Here is a 389-residue protein sequence, read N- to C-terminus: Elongation factor Tu-3 (389 aa).

Residues 10–203 (KPHLNIGTMG…AVDTYVPMPE (194 aa)) form the tr-type G domain. Positions 19-26 (GHVDHGKT) are G1. Position 19 to 26 (19 to 26 (GHVDHGKT)) interacts with GTP. Thr26 is a Mg(2+) binding site. The tract at residues 60–64 (GITIN) is G2. A G3 region spans residues 81 to 84 (DMPG). GTP-binding positions include 81-85 (DMPGH) and 136-139 (NKAD). A G4 region spans residues 136 to 139 (NKAD). Residues 173–175 (SGL) form a G5 region.

Belongs to the TRAFAC class translation factor GTPase superfamily. Classic translation factor GTPase family. EF-Tu/EF-1A subfamily. Monomer.

It is found in the cytoplasm. It catalyses the reaction GTP + H2O = GDP + phosphate + H(+). Functionally, GTP hydrolase that promotes the GTP-dependent binding of aminoacyl-tRNA to the A-site of ribosomes during protein biosynthesis. In Streptomyces ramocissimus, this protein is Elongation factor Tu-3.